Consider the following 944-residue polypeptide: Translation initiation factor IF-2 (944 aa).

Disordered regions lie at residues 50–91 and 114–349; these read SAKT…FAGK and KVEV…VPAT. 4 stretches are compositionally biased toward basic and acidic residues: residues 75-86, 124-157, 164-185, and 199-233; these read ESAKKNKEDHPR, VVTEKPKASEPVKKAEPKVEAKSEPKVEKVETKD, AEVKPENVADKKEPVVTEEKKK, and KRAEDIKKEQAAARPEKKKFDKNRNDRNNRSDNRR. Residues 267–280 are compositionally biased toward polar residues; it reads SSGSAPATDSFTPA. Residues 286–307 are compositionally biased toward basic and acidic residues; sequence SRRDRDRKKSDNNRDNTKDGNR. Composition is skewed to polar residues over residues 317 to 331 and 338 to 348; these read NRNQVRNARNSNWNQ and YQNNQSSSVPA. The tr-type G domain maps to 443-614; it reads ERPAVVTIMG…LLVAEVQELK (172 aa). The tract at residues 452–459 is G1; it reads GHVDHGKT. 452 to 459 provides a ligand contact to GTP; that stretch reads GHVDHGKT. The G2 stretch occupies residues 477-481; sequence GITQH. A G3 region spans residues 498–501; that stretch reads DTPG. Residues 498–502 and 552–555 each bind GTP; these read DTPGH and NKID. Residues 552 to 555 form a G4 region; it reads NKID. Residues 590-592 are G5; sequence SAK.

The protein belongs to the TRAFAC class translation factor GTPase superfamily. Classic translation factor GTPase family. IF-2 subfamily.

The protein localises to the cytoplasm. In terms of biological role, one of the essential components for the initiation of protein synthesis. Protects formylmethionyl-tRNA from spontaneous hydrolysis and promotes its binding to the 30S ribosomal subunits. Also involved in the hydrolysis of GTP during the formation of the 70S ribosomal complex. This Lactococcus lactis subsp. lactis (strain IL1403) (Streptococcus lactis) protein is Translation initiation factor IF-2 (infB).